A 1821-amino-acid polypeptide reads, in one-letter code: PH-interacting protein (1821 aa).

A Phosphoserine modification is found at serine 136. WD repeat units lie at residues 181 to 222 (GHLS…ATLR), 224 to 262 (HAAEISDMAVNYENTMIAAGSCDKMIRVWCLRTCAPLAV), 265 to 310 (GHSA…INPR), 319 to 360 (RPGV…KISE), and 363 to 402 (FHTDKVDSIQFSNTSNRFVSGSRDGTARIWQFKRREWKSI). A Glycyl lysine isopeptide (Lys-Gly) (interchain with G-Cter in SUMO2) cross-link involves residue lysine 421. 3 WD repeats span residues 422–461 (ITKMKVTMVAWDRHDNTVITAVNNMTLKVWNSYTGQLIHV), 464–504 (GHED…KVRS), and 512–551 (QGHGAVFDCKCSPDGQHFACTDSHGHLLIFGFGSSSKYDK). Phosphoserine is present on residues serine 641, serine 659, serine 674, serine 677, serine 683, and serine 692. Disordered regions lie at residues 653–695 (EQDL…SGQI) and 782–927 (DLGD…RLAV). A compositionally biased stretch (polar residues) spans 665–681 (SNASRVNRGSVSSTSEV). Over residues 800–810 (SALEETPRPLE) the composition is skewed to basic and acidic residues. Over residues 841–854 (SDGSSSDYSSDYSD) the composition is skewed to low complexity. A phosphoserine mark is found at serine 879, serine 880, serine 881, and serine 911. Residues 912 to 924 (PKKKKPKERKQKR) are compositionally biased toward basic residues. Positions 924–1129 (RLAVGELTEN…MELIPNNAVF (206 aa)) are mediates interaction with IRS1. Positions 1156–1263 (WGANPRDEEC…DLLLHFIKDQ (108 aa)) constitute a Bromo 1 domain. Residues serine 1281, serine 1283, and serine 1296 each carry the phosphoserine modification. A disordered region spans residues 1282–1310 (DSEEEEKDADVPGTSTRKRKDHQPRRRLR). Residues 1297–1310 (TRKRKDHQPRRRLR) show a composition bias toward basic residues. Serine 1315 carries the phosphoserine modification. Residues 1316 to 1421 (YDIQAWKKQC…AFFEEHISSV (106 aa)) form the Bromo 2 domain. Threonine 1359 bears the Phosphothreonine mark. A Phosphoserine modification is found at serine 1405. Residues 1435-1446 (NTISKKRKKRNR) are compositionally biased toward basic residues. The segment at 1435-1507 (NTISKKRKKR…PESSSVVRTR (73 aa)) is disordered. A compositionally biased stretch (low complexity) spans 1447 to 1457 (SSSLSSSAASS). Residue lysine 1470 forms a Glycyl lysine isopeptide (Lys-Gly) (interchain with G-Cter in SUMO1); alternate linkage. Lysine 1470 is covalently cross-linked (Glycyl lysine isopeptide (Lys-Gly) (interchain with G-Cter in SUMO2); alternate). Over residues 1471-1482 (SEVSTSPFSIPT) the composition is skewed to polar residues. Serine 1479 bears the Phosphoserine mark. At lysine 1497 the chain carries N6-acetyllysine. Serine 1525 carries the phosphoserine modification. Residue lysine 1533 is modified to N6-acetyllysine. The span at 1556-1576 (STLSSPDPLTFSHATKNNSAK) shows a compositional bias: polar residues. 3 disordered regions span residues 1556-1596 (STLS…VFSK), 1623-1676 (QVNG…NSEQ), and 1740-1785 (RSNR…DSEE). At serine 1560 the chain carries Phosphoserine. A Glycyl lysine isopeptide (Lys-Gly) (interchain with G-Cter in SUMO2) cross-link involves residue lysine 1644. Serine 1651 bears the Phosphoserine mark. A Glycyl lysine isopeptide (Lys-Gly) (interchain with G-Cter in SUMO2) cross-link involves residue lysine 1670. 2 positions are modified to phosphoserine: serine 1762 and serine 1783.

Interacts (via bromo domain) with acetylated lysine residues on histone H1.4, histone H3 and H4 (in vitro). Interacts with IRS1 and IRS2. Widely expressed with most abundant expression detected in pancreatic islets, brain and skeletal muscle. Predominantly expressed in developing and regenerating neurons. Expressed in adult brain (granular layer of the olfactorium bulb, hippocampus, dentate gyrus and cerebellum internal granular layer). Expressed in the CA3 region of adult hippocampus, adult and fetal retina, perinatal dorsal root ganglion and embryonal olfactory epithelia (at protein level).

It localises to the nucleus. Functionally, probable regulator of the insulin and insulin-like growth factor signaling pathways. Stimulates cell proliferation through regulation of cyclin transcription and has an anti-apoptotic activity through AKT1 phosphorylation and activation. Plays a role in the regulation of cell morphology and cytoskeletal organization. The polypeptide is PH-interacting protein (Phip) (Mus musculus (Mouse)).